Consider the following 207-residue polypeptide: Ras-related protein Rab-8A (207 aa).

The GTP site is built by S17, G18, V19, G20, K21, T22, C23, S35, S39, and T40. Mg(2+) is bound at residue T22. 2 consecutive short sequence motifs (switch) follow at residues 31–45 (DAFNSTFISTIGIDF) and 63–80 (DTAGQERFRTITTAYYRG). Mg(2+) is bound by residues T40 and D63. GTP is bound at residue G66. Phosphothreonine is present on T72. 5 residues coordinate GTP: N121, K122, D124, A152, and K153. Phosphoserine is present on residues S181 and S185. C204 bears the Cysteine methyl ester mark. C204 carries the S-geranylgeranyl cysteine lipid modification. The propeptide at 205–207 (VLL) is removed in mature form.

It belongs to the small GTPase superfamily. Rab family. As to quaternary structure, interacts (GTP-bound form) with MICALL1; regulates RAB8A association with recycling endosomes. Interacts with MICALL2; competes with RAB13 and is involved in E-cadherin endocytic recycling. Interacts (GTP-bound form) with MICAL1, MICALCL, MICAL3, EHBP1 and EHBP1L1; at least in case of MICAL1, MICALCL, MICAL3 and EHBP1L1 two molecules of RAB8A can bind to one molecule of the effector protein; ternary complexes of RAB8A, RAB13 and either MICAL1 or EHBP1L1 are possible. Interacts with EHD1. Interacts with MAP4K2 and SYTL4. Interacts with SGSM1 and SGSM3. Interacts with RABIF, RIMS2, RPH3A and RPH3A. Interacts with OPTN. Interacts with RAB3IP, RAB3IP functions as guanine exchange factor (GEF). Interacts with MYO5B. Interacts with CIMAP3. Interacts with BIRC6/bruce. Interacts with OCRL. Interacts with AHI1. Interacts with DCDC1. Interacts with LRRK2; interaction facilitates phosphorylation of Thr-72. Interacts with RAB31P, GDI1, GDI2, CHM, CHML, RABGGTA, RABGGTB, TBC1D15 and INPP5B; these interactions are dependent on Thr-72 not being phosphorylated. Interacts with RILPL1 and RILPL2; these interactions are dependent on the phosphorylation of Thr-72 by LRRK2. Interacts with DZIP1; prevents inhibition by the GDP-dissociation inhibitor GDI2. Interacts (in GDP-bound form) with RAB3IP/Rabin8, RAB3IP functions as guanine exchange factor (GEF) towards RAB8A. Interacts (in GDP-bound form) with RPGR, RPGR functions as GEF towards RAB8A. The cofactor is Mg(2+). Phosphorylation of Thr-72 in the switch II region by LRRK2 prevents the association of RAB regulatory proteins, including CHM, CHML and RAB GDP dissociation inhibitors GDI1 and GDI2. Phosphorylation by LRRK2 is required for localization to stressed lysosomes.

The protein localises to the cell membrane. It localises to the golgi apparatus. It is found in the endosome membrane. The protein resides in the recycling endosome membrane. Its subcellular location is the cell projection. The protein localises to the cilium. It localises to the cytoplasmic vesicle. It is found in the phagosome membrane. The protein resides in the cytoplasm. Its subcellular location is the cytoskeleton. The protein localises to the microtubule organizing center. It localises to the centrosome. It is found in the centriole. The protein resides in the cilium basal body. Its subcellular location is the midbody. The protein localises to the lysosome. The enzyme catalyses GTP + H2O = GDP + phosphate + H(+). Its activity is regulated as follows. Regulated by guanine nucleotide exchange factors (GEFs) such as RAB3IP/Rabin8 and RPGR which promote the exchange of bound GDP for free GTP, GTPase activating proteins (GAPs) which increase the GTP hydrolysis activity, and GDP dissociation inhibitors (GDIs) which inhibit the dissociation of the nucleotide from the GTPase. Activated in response to insulin. The small GTPases Rab are key regulators of intracellular membrane trafficking, from the formation of transport vesicles to their fusion with membranes. Rabs cycle between an inactive GDP-bound form and an active GTP-bound form that is able to recruit to membranes different sets of downstream effectors directly responsible for vesicle formation, movement, tethering and fusion. RAB8A is involved in polarized vesicular trafficking and neurotransmitter release. Together with RAB11A, RAB3IP, the exocyst complex, PARD3, PRKCI, ANXA2, CDC42 and DNMBP promotes transcytosis of PODXL to the apical membrane initiation sites (AMIS), apical surface formation and lumenogenesis. Regulates the compacted morphology of the Golgi. Together with MYO5B and RAB11A participates in epithelial cell polarization. Also involved in membrane trafficking to the cilium and ciliogenesis. Together with MICALL2, may also regulate adherens junction assembly. May play a role in insulin-induced transport to the plasma membrane of the glucose transporter GLUT4 and therefore play a role in glucose homeostasis. Involved in autophagy. Participates in the export of a subset of neosynthesized proteins through a Rab8-Rab10-Rab11-dependent endososomal export route. Targeted to and stabilized on stressed lysosomes through LRRK2 phosphorylation. Suppresses stress-induced lysosomal enlargement through EHBP1 and EHNP1L1 effector proteins. The chain is Ras-related protein Rab-8A (RAB8A) from Canis lupus familiaris (Dog).